The primary structure comprises 377 residues: Alanine racemase (377 aa).

Residue lysine 37 is the Proton acceptor; specific for D-alanine of the active site. Lysine 37 is subject to N6-(pyridoxal phosphate)lysine. Residue arginine 135 coordinates substrate. Catalysis depends on tyrosine 271, which acts as the Proton acceptor; specific for L-alanine. A substrate-binding site is contributed by methionine 319.

This sequence belongs to the alanine racemase family. Pyridoxal 5'-phosphate serves as cofactor.

The enzyme catalyses L-alanine = D-alanine. It functions in the pathway amino-acid biosynthesis; D-alanine biosynthesis; D-alanine from L-alanine: step 1/1. Catalyzes the interconversion of L-alanine and D-alanine. May also act on other amino acids. The chain is Alanine racemase (alr) from Helicobacter acinonychis (strain Sheeba).